The sequence spans 226 residues: ATP synthase subunit a (226 aa).

6 helical membrane passes run 22–42 (SMNW…FWLI), 73–93 (IIIF…SLIP), 102–122 (LLLN…YLIY), 135–155 (LNSP…SLII), 173–193 (LILT…PINL), and 202–222 (LEIF…ILYF).

It belongs to the ATPase A chain family. As to quaternary structure, F-type ATPases have 2 components, CF(1) - the catalytic core - and CF(0) - the membrane proton channel. CF(1) has five subunits: alpha(3), beta(3), gamma(1), delta(1), epsilon(1). CF(0) has three main subunits: a, b and c.

It localises to the mitochondrion inner membrane. Functionally, mitochondrial membrane ATP synthase (F(1)F(0) ATP synthase or Complex V) produces ATP from ADP in the presence of a proton gradient across the membrane which is generated by electron transport complexes of the respiratory chain. F-type ATPases consist of two structural domains, F(1) - containing the extramembraneous catalytic core and F(0) - containing the membrane proton channel, linked together by a central stalk and a peripheral stalk. During catalysis, ATP synthesis in the catalytic domain of F(1) is coupled via a rotary mechanism of the central stalk subunits to proton translocation. Key component of the proton channel; it may play a direct role in the translocation of protons across the membrane. The sequence is that of ATP synthase subunit a (ATP6) from Apis mellifera ligustica (Common honeybee).